The following is a 222-amino-acid chain: Large ribosomal subunit protein uL1 (222 aa).

The protein belongs to the universal ribosomal protein uL1 family. As to quaternary structure, part of the 50S ribosomal subunit.

Binds directly to 23S rRNA. Probably involved in E site tRNA release. Functionally, protein L1 is also a translational repressor protein, it controls the translation of its operon by binding to its mRNA. The polypeptide is Large ribosomal subunit protein uL1 (Pyrobaculum neutrophilum (strain DSM 2338 / JCM 9278 / NBRC 100436 / V24Sta) (Thermoproteus neutrophilus)).